The sequence spans 260 residues: 1-(5-phosphoribosyl)-5-[(5-phosphoribosylamino)methylideneamino] imidazole-4-carboxamide isomerase (260 aa).

The active-site Proton acceptor is Asp8. Residue Asp130 is the Proton donor of the active site.

It belongs to the HisA/HisF family.

The protein resides in the cytoplasm. It catalyses the reaction 1-(5-phospho-beta-D-ribosyl)-5-[(5-phospho-beta-D-ribosylamino)methylideneamino]imidazole-4-carboxamide = 5-[(5-phospho-1-deoxy-D-ribulos-1-ylimino)methylamino]-1-(5-phospho-beta-D-ribosyl)imidazole-4-carboxamide. It participates in amino-acid biosynthesis; L-histidine biosynthesis; L-histidine from 5-phospho-alpha-D-ribose 1-diphosphate: step 4/9. The protein is 1-(5-phosphoribosyl)-5-[(5-phosphoribosylamino)methylideneamino] imidazole-4-carboxamide isomerase of Chlorobaculum parvum (strain DSM 263 / NCIMB 8327) (Chlorobium vibrioforme subsp. thiosulfatophilum).